A 131-amino-acid chain; its full sequence is MFANIGWGEMLVLVMVGLVVLGPERLPGAIRWAASALRQARDYLSGVTSQLREDIGPEFDDLRGHLGELQKLRGMTPRAALTKHLLDGDDSLFTGDFDRPTPKKPDAAGSAGPDATEQIGAGPIPFDSDAT.

A helical transmembrane segment spans residues 2 to 22 (FANIGWGEMLVLVMVGLVVLG). The segment at 90–131 (DSLFTGDFDRPTPKKPDAAGSAGPDATEQIGAGPIPFDSDAT) is disordered. Basic and acidic residues predominate over residues 96-106 (DFDRPTPKKPD).

Belongs to the TatB family. As to quaternary structure, the Tat system comprises two distinct complexes: a TatABC complex, containing multiple copies of TatA, TatB and TatC subunits, and a separate TatA complex, containing only TatA subunits. Substrates initially bind to the TatABC complex, which probably triggers association of the separate TatA complex to form the active translocon.

It is found in the cell membrane. Part of the twin-arginine translocation (Tat) system that transports large folded proteins containing a characteristic twin-arginine motif in their signal peptide across membranes. Together with TatC, TatB is part of a receptor directly interacting with Tat signal peptides. TatB may form an oligomeric binding site that transiently accommodates folded Tat precursor proteins before their translocation. This Mycobacterium bovis (strain ATCC BAA-935 / AF2122/97) protein is Sec-independent protein translocase protein TatB.